Consider the following 596-residue polypeptide: DNA primase (596 aa).

The CHC2-type zinc-finger motif lies at 41–65; sequence CPFHHEKTPSFSVSQDKQIYKCFGC. Residues 255–336 enclose the Toprim domain; the sequence is DTIIIVEGYM…DIKIIKIPDG (82 aa). Glutamate 261, aspartate 305, and aspartate 307 together coordinate Mg(2+).

It belongs to the DnaG primase family. As to quaternary structure, monomer. Interacts with DnaB. Requires Zn(2+) as cofactor. It depends on Mg(2+) as a cofactor.

It carries out the reaction ssDNA + n NTP = ssDNA/pppN(pN)n-1 hybrid + (n-1) diphosphate.. Its function is as follows. RNA polymerase that catalyzes the synthesis of short RNA molecules used as primers for DNA polymerase during DNA replication. This is DNA primase from Clostridium acetobutylicum (strain ATCC 824 / DSM 792 / JCM 1419 / IAM 19013 / LMG 5710 / NBRC 13948 / NRRL B-527 / VKM B-1787 / 2291 / W).